The following is a 296-amino-acid chain: Cytochrome bc1 complex cytochrome c subunit (296 aa).

The span at 1 to 19 shows a compositional bias: polar residues; it reads MMETNPQTSEGAGKAQSSA. The tract at residues 1 to 27 is disordered; sequence MMETNPQTSEGAGKAQSSAKKVKNRRK. The chain crosses the membrane as a helical span at residues 32–52; it reads VAGAMALTIGLSGAGILATAI. 2 Cytochrome c domains span residues 67 to 147 and 177 to 255; these read ALIA…AANG and LDVS…KSTK. Cys-80, Cys-83, His-84, Cys-190, Cys-193, and His-194 together coordinate heme c. The chain crosses the membrane as a helical span at residues 274–294; that stretch reads GLFMWGIGIMVLIAAAMWIGS.

The cytochrome bc1 complex is composed of a cytochrome b (QcrB), the Rieske iron-sulfur protein (QcrA) and a diheme cytochrome c (QcrC) subunit. The bc1 complex forms a supercomplex with cytochrome c oxidase (cytochrome aa3). Binds 2 heme c groups covalently per subunit.

Its subcellular location is the cell membrane. It catalyses the reaction a quinol + 2 Fe(III)-[cytochrome c](out) = a quinone + 2 Fe(II)-[cytochrome c](out) + 2 H(+)(out). Its function is as follows. Cytochrome c1 subunit of the cytochrome bc1 complex, an essential component of the respiratory electron transport chain required for ATP synthesis. The bc1 complex catalyzes the oxidation of menaquinol and the reduction of cytochrome c in the respiratory chain. The bc1 complex operates through a Q-cycle mechanism that couples electron transfer to generation of the proton gradient that drives ATP synthesis. This Corynebacterium efficiens (strain DSM 44549 / YS-314 / AJ 12310 / JCM 11189 / NBRC 100395) protein is Cytochrome bc1 complex cytochrome c subunit (qcrC).